The chain runs to 854 residues: Glucans biosynthesis glucosyltransferase H (854 aa).

7 consecutive transmembrane segments (helical) span residues 155 to 175, 209 to 229, 528 to 548, 583 to 603, 619 to 639, 671 to 691, and 695 to 715; these read ILLA…KTIL, ILVL…TALM, VFLT…FLVL, IALF…SVIL, FLSL…RMLF, FVRH…MAWL, and FLWW…VSVY.

The protein belongs to the glycosyltransferase 2 family. OpgH subfamily.

It localises to the cell inner membrane. The protein operates within glycan metabolism; osmoregulated periplasmic glucan (OPG) biosynthesis. Functionally, involved in the biosynthesis of osmoregulated periplasmic glucans (OPGs). This Pectobacterium atrosepticum (strain SCRI 1043 / ATCC BAA-672) (Erwinia carotovora subsp. atroseptica) protein is Glucans biosynthesis glucosyltransferase H.